Reading from the N-terminus, the 115-residue chain is Skin calcitonin gene-related peptide (115 aa).

Residues 1–25 (MVLLKISSLLAVLGLLVCQMYSSQA) form the signal peptide. A propeptide spans 26–69 (APARRALEPLPDRVTEAHRLLRALIRELTAEDMEASSSGAAHKR) (removed in mature form by a carboxypeptidase). Cysteines 71 and 76 form a disulfide. Phe-106 is modified (phenylalanine amide). Positions 107–115 (GRRRRSLHV) are cleaved as a propeptide — removed in mature form by an endoprotease.

In terms of tissue distribution, skin, intestine and brain.

It is found in the secreted. Functionally, CGRP induces vasodilation. It dilates a variety of vessels including the coronary, cerebral and systemic vasculature. Its abundance in the CNS also points toward a neurotransmitter or neuromodulator role. In Phyllomedusa bicolor (Two-colored leaf frog), this protein is Skin calcitonin gene-related peptide.